The primary structure comprises 89 residues: Small ribosomal subunit protein uS19 (89 aa).

It belongs to the universal ribosomal protein uS19 family.

Protein S19 forms a complex with S13 that binds strongly to the 16S ribosomal RNA. The polypeptide is Small ribosomal subunit protein uS19 (Ruthia magnifica subsp. Calyptogena magnifica).